Consider the following 712-residue polypeptide: Polyribonucleotide nucleotidyltransferase (712 aa).

The Mg(2+) site is built by Asp-485 and Asp-491. One can recognise a KH domain in the interval 552–615 (PRIHTIKINP…EAIRRIEAIT (64 aa)). Positions 621-689 (NRIYEGKVVR…RQGRVRLSIK (69 aa)) constitute an S1 motif domain.

Belongs to the polyribonucleotide nucleotidyltransferase family. Component of the RNA degradosome, which is a multiprotein complex involved in RNA processing and mRNA degradation. Requires Mg(2+) as cofactor.

The protein resides in the cytoplasm. It carries out the reaction RNA(n+1) + phosphate = RNA(n) + a ribonucleoside 5'-diphosphate. In terms of biological role, involved in mRNA degradation. Catalyzes the phosphorolysis of single-stranded polyribonucleotides processively in the 3'- to 5'-direction. In Aeromonas hydrophila subsp. hydrophila (strain ATCC 7966 / DSM 30187 / BCRC 13018 / CCUG 14551 / JCM 1027 / KCTC 2358 / NCIMB 9240 / NCTC 8049), this protein is Polyribonucleotide nucleotidyltransferase.